The following is a 370-amino-acid chain: MQTAARRSFDYDMPLIQTPTSACQIRQAWAKVADTPDRETADRLKDEIKALLKETNAVLVAHYYVDPLIQDLALETGGCVGDSLEMARFGAEHEAGTLVVAGVRFMGESAKILCPEKTVLMPDLEAECSLDLGCPEEAFSAFCDQHPDRTVVVYANTSAAVKARADWVVTSSVALEIVSYLKSRGEKLIWGPDRHLGDYICRETGADMLLWQGSCIVHNEFKGQELAALKAEHPDAVVLVHPESPQSVIELSDVVGSTSKLLKAAVSRPEKKFIVATDLGILHEMQKQAPDKQFIAAPTAGNGGSCKSCAFCPWMAMNSLGGIKYALTSGRNEILLDRKLGEAAKLPLQRMLDFAAGLKRGDVFNGMGPA.

Iminosuccinate contacts are provided by His62 and Ser83. Cys128 contributes to the [4Fe-4S] cluster binding site. Residues 154-156 (YAN) and Ser171 each bind iminosuccinate. Cys215 contacts [4Fe-4S] cluster. Iminosuccinate is bound by residues 241 to 243 (HPE) and Thr258. Residue Cys312 coordinates [4Fe-4S] cluster.

It belongs to the quinolinate synthase family. Type 1 subfamily. It depends on [4Fe-4S] cluster as a cofactor.

The protein resides in the cytoplasm. It catalyses the reaction iminosuccinate + dihydroxyacetone phosphate = quinolinate + phosphate + 2 H2O + H(+). Its pathway is cofactor biosynthesis; NAD(+) biosynthesis; quinolinate from iminoaspartate: step 1/1. Its function is as follows. Catalyzes the condensation of iminoaspartate with dihydroxyacetone phosphate to form quinolinate. This is Quinolinate synthase from Neisseria meningitidis serogroup A / serotype 4A (strain DSM 15465 / Z2491).